The primary structure comprises 346 residues: MTPASALVDQRSRPLRVLRLSLTARCNLACPYCCPDLEDPPDLLSLEQQLRLIRVACRLGIHSLRLTGGEPLLSARLLPLLQAIAAARATPGDPLQGLQQVALTTNGTLLSDQRACDLRQAGLDRITVSLDGVDGAVVARMAGRPTATAGDSLARKVLGGLASARSAGFDPLAGELKLNAVIQRGVNEDQLLPLADLARDQGVELRLIEYMDVGNRNQWRLDQVLSAAEMVTRIRARWPLQAVGRPTGGTAQRWRYVDGGGHLGVIASISEPFCGDCNRLRVTADGQAFRCLFASVGTDLKPALHCEAELLRLVADLWRRRDDRYSDERQQTTGSMPHAEMAYLGG.

The 231-residue stretch at 10-240 folds into the Radical SAM core domain; it reads QRSRPLRVLR…VTRIRARWPL (231 aa). A GTP-binding site is contributed by Arg19. [4Fe-4S] cluster is bound by residues Cys26 and Cys30. S-adenosyl-L-methionine is bound at residue Tyr32. Cys33 serves as a coordination point for [4Fe-4S] cluster. Position 65 (Arg65) interacts with GTP. Position 69 (Gly69) interacts with S-adenosyl-L-methionine. Thr104 contributes to the GTP binding site. Position 129 (Ser129) interacts with S-adenosyl-L-methionine. Residue Lys177 coordinates GTP. Met211 serves as a coordination point for S-adenosyl-L-methionine. Residues Cys274 and Cys277 each contribute to the [4Fe-4S] cluster site. 279–281 is a GTP binding site; it reads RLR. Residue Cys291 coordinates [4Fe-4S] cluster. The disordered stretch occupies residues 326–346; sequence SDERQQTTGSMPHAEMAYLGG.

This sequence belongs to the radical SAM superfamily. MoaA family. In terms of assembly, monomer and homodimer. [4Fe-4S] cluster serves as cofactor.

The enzyme catalyses GTP + AH2 + S-adenosyl-L-methionine = (8S)-3',8-cyclo-7,8-dihydroguanosine 5'-triphosphate + 5'-deoxyadenosine + L-methionine + A + H(+). The protein operates within cofactor biosynthesis; molybdopterin biosynthesis. In terms of biological role, catalyzes the cyclization of GTP to (8S)-3',8-cyclo-7,8-dihydroguanosine 5'-triphosphate. This chain is GTP 3',8-cyclase, found in Parasynechococcus marenigrum (strain WH8102).